The sequence spans 33 residues: Photosystem II reaction center protein Psb30 (33 aa).

The helical transmembrane segment at 5–25 (LIVQLTSLALITLAGPLIVAL) threads the bilayer.

This sequence belongs to the Psb30/Ycf12 family. PSII is composed of 1 copy each of membrane proteins PsbA, PsbB, PsbC, PsbD, PsbE, PsbF, PsbH, PsbI, PsbJ, PsbK, PsbL, PsbM, PsbT, PsbY, PsbZ, Psb30/Ycf12, peripheral proteins of the oxygen-evolving complex and a large number of cofactors. It forms dimeric complexes.

It localises to the plastid. It is found in the chloroplast thylakoid membrane. Functionally, a core subunit of photosystem II (PSII), probably helps stabilize the reaction center. The chain is Photosystem II reaction center protein Psb30 from Euglena sanguinea.